The following is an 821-amino-acid chain: DNA gyrase subunit A (821 aa).

The Topo IIA-type catalytic domain occupies 35 to 500 (LPDVRDGLKP…GLETIEDEDL (466 aa)). Catalysis depends on Tyr-123, which acts as the O-(5'-phospho-DNA)-tyrosine intermediate. Positions 527–533 (QKRGGKG) match the GyrA-box motif.

It belongs to the type II topoisomerase GyrA/ParC subunit family. As to quaternary structure, heterotetramer, composed of two GyrA and two GyrB chains. In the heterotetramer, GyrA contains the active site tyrosine that forms a transient covalent intermediate with DNA, while GyrB binds cofactors and catalyzes ATP hydrolysis.

The protein localises to the cytoplasm. The enzyme catalyses ATP-dependent breakage, passage and rejoining of double-stranded DNA.. A type II topoisomerase that negatively supercoils closed circular double-stranded (ds) DNA in an ATP-dependent manner to modulate DNA topology and maintain chromosomes in an underwound state. Negative supercoiling favors strand separation, and DNA replication, transcription, recombination and repair, all of which involve strand separation. Also able to catalyze the interconversion of other topological isomers of dsDNA rings, including catenanes and knotted rings. Type II topoisomerases break and join 2 DNA strands simultaneously in an ATP-dependent manner. This is DNA gyrase subunit A from Bacillus subtilis (strain 168).